Reading from the N-terminus, the 420-residue chain is Tyrosine--tRNA ligase (420 aa).

Position 33 (Tyr33) interacts with L-tyrosine. The 'HIGH' region motif lies at 38-47 (PTADSLHVGH). Residues Tyr167 and Gln171 each coordinate L-tyrosine. A 'KMSKS' region motif is present at residues 227 to 231 (KFGKT). Residue Lys230 coordinates ATP. The region spanning 353 to 419 (LTVADLLVKV…GKRNYALVKV (67 aa)) is the S4 RNA-binding domain.

It belongs to the class-I aminoacyl-tRNA synthetase family. TyrS type 1 subfamily. In terms of assembly, homodimer.

The protein localises to the cytoplasm. It carries out the reaction tRNA(Tyr) + L-tyrosine + ATP = L-tyrosyl-tRNA(Tyr) + AMP + diphosphate + H(+). In terms of biological role, catalyzes the attachment of tyrosine to tRNA(Tyr) in a two-step reaction: tyrosine is first activated by ATP to form Tyr-AMP and then transferred to the acceptor end of tRNA(Tyr). The protein is Tyrosine--tRNA ligase of Anaeromyxobacter dehalogenans (strain 2CP-1 / ATCC BAA-258).